A 343-amino-acid chain; its full sequence is Ribosomal RNA small subunit methyltransferase C (343 aa).

It belongs to the methyltransferase superfamily. RsmC family. As to quaternary structure, monomer.

It localises to the cytoplasm. The catalysed reaction is guanosine(1207) in 16S rRNA + S-adenosyl-L-methionine = N(2)-methylguanosine(1207) in 16S rRNA + S-adenosyl-L-homocysteine + H(+). Specifically methylates the guanine in position 1207 of 16S rRNA in the 30S particle. This Escherichia coli O17:K52:H18 (strain UMN026 / ExPEC) protein is Ribosomal RNA small subunit methyltransferase C.